Reading from the N-terminus, the 415-residue chain is Histidine--tRNA ligase (415 aa).

The protein belongs to the class-II aminoacyl-tRNA synthetase family. Homodimer.

The protein localises to the cytoplasm. It carries out the reaction tRNA(His) + L-histidine + ATP = L-histidyl-tRNA(His) + AMP + diphosphate + H(+). This is Histidine--tRNA ligase from Clostridium botulinum (strain Langeland / NCTC 10281 / Type F).